We begin with the raw amino-acid sequence, 376 residues long: E3 ubiquitin-protein ligase RNF133 (376 aa).

Positions S65 to I167 constitute a PA domain. A helical transmembrane segment spans residues Y190–I210. The RING-type; atypical zinc finger occupies C256 to K297. The disordered stretch occupies residues E327–P376. A compositionally biased stretch (polar residues) spans N355 to Q364.

In terms of assembly, interacts with E3 ligase UBE2J1. Post-translationally, auto-ubiquitinated. Expression is testis-specific.

It localises to the endoplasmic reticulum membrane. It carries out the reaction S-ubiquitinyl-[E2 ubiquitin-conjugating enzyme]-L-cysteine + [acceptor protein]-L-lysine = [E2 ubiquitin-conjugating enzyme]-L-cysteine + N(6)-ubiquitinyl-[acceptor protein]-L-lysine.. It functions in the pathway protein modification; protein ubiquitination. In terms of biological role, has E3 ubiquitin-protein ligase activity. Plays a role in male fecundity through the interaction with the E2 ubituitin-protein ligase UBE2J1. The chain is E3 ubiquitin-protein ligase RNF133 from Homo sapiens (Human).